A 253-amino-acid polypeptide reads, in one-letter code: MRKPIIAGNWKMNKTLGEAVSFVEEVKSSIPAADKAEAVVCAPALFLEKLTSAVKGTDLKVGAQNMHFEENGAFTGEISPVALKDLGVDYCVIGHSERREMFAETDETVNKKAHAAFKHGIVPIICVGETLEEREAGKTNDLVADQVKKGLAGLSEEQVAASVIAYEPIWAIGTGKSSTAKDANDVCAHIRKVVAESFSQETADKLRIQYGGSVKPANIKEYMAESDIDGALVGGASLEPQSFVQLLEEGQYE.

Position 9 to 11 (9 to 11) interacts with substrate; sequence NWK. The active-site Electrophile is H95. The active-site Proton acceptor is E167. Substrate is bound by residues G173, S213, and 234–235; that span reads GG. A Phosphoserine modification is found at S213.

The protein belongs to the triosephosphate isomerase family. Homodimer.

The protein resides in the cytoplasm. The enzyme catalyses D-glyceraldehyde 3-phosphate = dihydroxyacetone phosphate. It functions in the pathway carbohydrate biosynthesis; gluconeogenesis. The protein operates within carbohydrate degradation; glycolysis; D-glyceraldehyde 3-phosphate from glycerone phosphate: step 1/1. In terms of biological role, involved in the gluconeogenesis. Catalyzes stereospecifically the conversion of dihydroxyacetone phosphate (DHAP) to D-glyceraldehyde-3-phosphate (G3P). In Bacillus velezensis (strain DSM 23117 / BGSC 10A6 / LMG 26770 / FZB42) (Bacillus amyloliquefaciens subsp. plantarum), this protein is Triosephosphate isomerase.